The sequence spans 757 residues: Subtilisin-like protease SBT1.7 (757 aa).

Positions 1-24 (MSSSFLSSTAFFLLLCLGFCHVSS) are cleaved as a signal peptide. Positions 25-106 (SSSDQGTYIV…VLPEHRYELH (82 aa)) are excised as a propeptide. Residues 31–106 (TYIVHMAKSQ…VLPEHRYELH (76 aa)) enclose the Inhibitor I9 domain. The region spanning 102–610 (RYELHTTRTP…AGHVSPTTAT (509 aa)) is the Peptidase S8 domain. Catalysis depends on aspartate 139, which acts as the Charge relay system. N-linked (GlcNAc...) asparagine glycosylation is present at asparagine 170. The interval 196–219 (PIDESKESRSPRDDDGHGTHTSST) is disordered. Residues 198–213 (DESKESRSPRDDDGHG) show a composition bias toward basic and acidic residues. Histidine 212 (charge relay system) is an active-site residue. 3 N-linked (GlcNAc...) asparagine glycosylation sites follow: asparagine 352, asparagine 376, and asparagine 379. The active-site Charge relay system is serine 542. N-linked (GlcNAc...) asparagine glycans are attached at residues asparagine 631 and asparagine 644.

This sequence belongs to the peptidase S8 family. Expressed in immature siliques and at lower levels in stems and flowers. Widely expressed at low levels.

It is found in the secreted. The protein resides in the cell wall. Activated by calcium. Inhibited by the serine protease inhibitors 4-(2-aminoethyl)benzenesulphonyl fluoride (AEBSF), PMSF, di-isopropyl phosphofluoridate (DFP) and soybean trypsin inhibitor (SBTI). Not inhibited by benzamidine or iodoacetamide. Leupeptin and pepstatin A have a minor inhibitory action. Serine protease. Has a substrate preference for the hydrophobic residues Phe and Ala and the basic residue Asp in the P1 position, and for Asp, Leu or Ala in the P1' position. Essential for mucilage release from seed coats. Triggers the accumulation and/or activation of cell wall modifying enzymes necessary either for the loosening of the outer primary cell wall, or to facilitate swelling of the mucilage. The protein is Subtilisin-like protease SBT1.7 of Arabidopsis thaliana (Mouse-ear cress).